Here is a 260-residue protein sequence, read N- to C-terminus: Indole-3-glycerol phosphate synthase (260 aa).

This sequence belongs to the TrpC family.

The catalysed reaction is 1-(2-carboxyphenylamino)-1-deoxy-D-ribulose 5-phosphate + H(+) = (1S,2R)-1-C-(indol-3-yl)glycerol 3-phosphate + CO2 + H2O. Its pathway is amino-acid biosynthesis; L-tryptophan biosynthesis; L-tryptophan from chorismate: step 4/5. The polypeptide is Indole-3-glycerol phosphate synthase (Neisseria gonorrhoeae (strain ATCC 700825 / FA 1090)).